A 145-amino-acid polypeptide reads, in one-letter code: 3-hydroxyacyl-[acyl-carrier-protein] dehydratase FabZ (145 aa).

His-47 is a catalytic residue.

It belongs to the thioester dehydratase family. FabZ subfamily.

The protein resides in the cytoplasm. It carries out the reaction a (3R)-hydroxyacyl-[ACP] = a (2E)-enoyl-[ACP] + H2O. Functionally, involved in unsaturated fatty acids biosynthesis. Catalyzes the dehydration of short chain beta-hydroxyacyl-ACPs and long chain saturated and unsaturated beta-hydroxyacyl-ACPs. The protein is 3-hydroxyacyl-[acyl-carrier-protein] dehydratase FabZ of Aromatoleum aromaticum (strain DSM 19018 / LMG 30748 / EbN1) (Azoarcus sp. (strain EbN1)).